A 371-amino-acid polypeptide reads, in one-letter code: MSLEPFIDSKPFTFGVELEMQIVNTHDYDLTKAGSDLLRLIKDEKIPGNITPEITESMIELSTGICTTHEQAVTDLRKIRDTLVSAADHLNVGLCGGGTHAFQQWSERQIVDTPRFQYLSELYGYLAKQFTVFGQHVHIGCPDPNSALYLLHSMSRFIPHFIALSASSPFVQGVDTGFHSARLNSVFAFPLSGRAPFVLTWDSFEEYFSKMVHTGVVNSMKDFYWDIRPKPGFGTIEVRVMDTPLSVDRAAAIACYIQTLARHLLLDKPIAPQEDDYLVYTFNRFEACRFGLAGTCINPQTGERKTISEDILETLDLIAPHAEALGSGNALAEIGAIARGQVNDATWLRGVVEREKSLHEAVRQQCLQWRA.

Belongs to the glutamate--cysteine ligase type 2 family. YbdK subfamily.

It catalyses the reaction L-cysteine + L-glutamate + ATP = gamma-L-glutamyl-L-cysteine + ADP + phosphate + H(+). ATP-dependent carboxylate-amine ligase which exhibits weak glutamate--cysteine ligase activity. This is Putative glutamate--cysteine ligase 2 from Paraburkholderia phytofirmans (strain DSM 17436 / LMG 22146 / PsJN) (Burkholderia phytofirmans).